The following is a 763-amino-acid chain: C6 finger domain transcription factor hasF (763 aa).

The span at 1–20 shows a compositional bias: low complexity; that stretch reads MDSTTSSSRFSVSSPQSGPS. Residues 1–25 form a disordered region; that stretch reads MDSTTSSSRFSVSSPQSGPSAGIQK. Positions 34–61 form a DNA-binding region, zn(2)-C6 fungal-type; the sequence is CLTCRRRKVKCDHAQPVCTPCQRGGRVC. Disordered stretches follow at residues 68–91, 112–145, and 189–219; these read PVSQAPSRVGTGSRVSRTNLRSGQ, GGNMSILPDAKGTSTGSPSDVDQGGNALPNPKCE, and DQSSGAPADSPPSDQPTPPFPFSGSTVESLT. The segment covering 80–89 has biased composition (polar residues); the sequence is SRVSRTNLRS. The segment covering 197–209 has biased composition (pro residues); sequence DSPPSDQPTPPFP.

It is found in the nucleus. In terms of biological role, transcription factor; part of the gene cluster that mediates the biosynthesis of hexadehydro-astechrome (HAS), a tryptophan-derived iron(III)-complex that acts as a virulence factor in infected mice. Does not regulate the expression of the HAS biosynthetic genes (at least under the growth conditions tested). The polypeptide is C6 finger domain transcription factor hasF (Aspergillus fumigatus (strain CBS 144.89 / FGSC A1163 / CEA10) (Neosartorya fumigata)).